A 207-amino-acid polypeptide reads, in one-letter code: Macrophage immunometabolism regulator (207 aa).

Methionine 1 bears the N-acetylmethionine mark. The disordered stretch occupies residues 1–41 (MEVDVNGESRSALTTLPLPVAEASSPGKAEAEKPRCSSTPC). Phosphoserine is present on residues serine 25, serine 140, and serine 167.

The protein belongs to the UNC119-binding protein family. Interacts with UNC119 and UNC119B; interaction preferentially takes place when UNC119 and UNC119B are unliganded with myristoylated proteins.

The protein localises to the cytoplasm. The protein resides in the cell projection. It localises to the cilium. In terms of biological role, regulates the macrophage function, by enhancing the resolution of inflammation and wound repair functions mediated by M2 macrophages. The regulation of macrophage function is, due at least in part, to its ability to inhibit glycolysis. May play also a role in trafficking of proteins via its interaction with UNC119 and UNC119B cargo adapters: may help the release of UNC119 and UNC119B cargo or the recycling of UNC119 and UNC119B. May play a role in ciliary membrane localization via its interaction with UNC119B and protein transport into photoreceptor cells. This is Macrophage immunometabolism regulator (MACIR) from Bos taurus (Bovine).